Here is a 354-residue protein sequence, read N- to C-terminus: Putative Xaa-Pro aminopeptidase (354 aa).

Asp213, Asp224, His290, Glu319, and Glu333 together coordinate Mn(2+).

Belongs to the peptidase M24B family. Requires Mn(2+) as cofactor.

The enzyme catalyses Release of any N-terminal amino acid, including proline, that is linked to proline, even from a dipeptide or tripeptide.. The protein is Putative Xaa-Pro aminopeptidase (pepP) of Mycoplasma pneumoniae (strain ATCC 29342 / M129 / Subtype 1) (Mycoplasmoides pneumoniae).